A 536-amino-acid chain; its full sequence is Lariat debranching enzyme (536 aa).

Residues cysteine 8, histidine 10, aspartate 39, and asparagine 84 each coordinate a divalent metal cation. The tract at residues 124 to 154 (SGIFKSHDYRKGHFECPPYNQQTIRSAYHVR) is lariat recognition loop. The a divalent metal cation site is built by histidine 174, histidine 226, and histidine 228. A disordered region spans residues 388-536 (EEGSVRGEYE…YAAEDEDEAK (149 aa)). Over residues 414-426 (EYNTDNSGLSSIN) the composition is skewed to polar residues. Residues 430 to 441 (IMLDDEGGDEDL) show a composition bias toward acidic residues. A compositionally biased stretch (basic and acidic residues) spans 484-504 (ELEKSGVNKQVEEKSLNERPL).

It belongs to the lariat debranching enzyme family. It depends on Fe(2+) as a cofactor. The cofactor is Zn(2+). Requires Mn(2+) as cofactor.

The protein localises to the nucleus. Active in presence of diverse metals including Fe(2+), Zn(2+), Mn(2+). Also activated by Ca(2+). Binds two metal cations in two adjacent alpha and beta metal-binding pockets. In terms of biological role, cleaves the 2'-5' phosphodiester linkage at the branch point of excised lariat intron RNA and converts them into linear molecules that can be subsequently degraded, thereby facilitating ribonucleotide turnover. Linked to its role in pre-mRNA processing mechanism, may also participate in retrovirus replication and have an antiviral cell-intrinsic defense function. This Gallus gallus (Chicken) protein is Lariat debranching enzyme (DBR1).